A 140-amino-acid chain; its full sequence is Inner membrane protein YphA (140 aa).

Topologically, residues 1-13 are cytoplasmic; sequence MNTLRYFDFGAAR. A helical transmembrane segment spans residues 14–34; sequence PVLLLIARIAVVLIFIIFGFP. Over 35–56 the chain is Periplasmic; it reads KMMGFDGTVQYMASLGAPMPML. Residues 57-77 form a helical membrane-spanning segment; sequence AAIIAVVMEVPAAILIVLGFF. Topologically, residues 78–79 are cytoplasmic; that stretch reads TR. The helical transmembrane segment at 80–100 threads the bilayer; sequence PLAVLFIFYTLGTAVIGHHYW. At 101 to 116 the chain is on the periplasmic side; the sequence is DMTGDAVGPNMINFWK. The helical transmembrane segment at 117-137 threads the bilayer; the sequence is NVSIAGAFLLLAITGPGAISL. Over 138–140 the chain is Cytoplasmic; it reads DRR.

The protein belongs to the DoxX family.

The protein resides in the cell inner membrane. The protein is Inner membrane protein YphA (yphA) of Escherichia coli (strain K12).